The following is a 1265-amino-acid chain: Nestin (1265 aa).

A head region spans residues 1-16; sequence MELLGVRQPFGPQFQE. Residues 17–52 form a coil 1A region; sequence EKYQMLELNHRLESYLGRVKLLEEENKLLREEIHTL. Residues 17-324 form the IF rod domain; it reads EKYQMLELNH…ALLDSEGLRI (308 aa). The tract at residues 53-64 is linker 1; that stretch reads KSSRDPAGQRKA. The interval 65 to 160 is coil 1B; the sequence is QEEALSQARR…QVHQENMETM (96 aa). The tract at residues 161 to 183 is linker 12; that stretch reads QASLKQTKQVLMAPQRVQATSIP. The segment at 184–203 is coil 2A; the sequence is DLGQEYGYKAAQAWQEAANN. The tract at residues 204–206 is linker 2; that stretch reads YQK. Residues 207–324 are coil 2B; that stretch reads QVGRLEESLN…ALLDSEGLRI (118 aa). The tract at residues 325–1265 is tail; sequence DRPTPNKTSS…EGDSWSSGDE (941 aa). Residues 383–402 show a composition bias toward polar residues; the sequence is PSWTLTRGTPQRPPSSTSMT. Disordered regions lie at residues 383-521, 667-830, 863-1073, 1093-1116, and 1232-1265; these read PSWT…TEVS, FEVE…PDME, HESL…KASQ, AQTT…LESS, and IRDD…SGDE. Basic and acidic residues predominate over residues 403 to 418; the sequence is EKTEDHISEETKRSAE. The segment covering 422–441 has biased composition (polar residues); the sequence is DQLQQEKVQQDWTLESTLPK. Over residues 444 to 459 the composition is skewed to basic and acidic residues; the sequence is AEPKPELQPEEIKVED. A compositionally biased stretch (polar residues) spans 479–496; the sequence is LTSVPAEQQGSMSQTPET. Acidic residues-rich tracts occupy residues 508-520 and 730-739; these read EVSE…DTEV and LNEDQSEAEE. Composition is skewed to basic and acidic residues over residues 784 to 796, 803 to 819, and 863 to 897; these read YKSD…HIGE, EKER…RFNT, and HESL…KEED. Positions 901–910 are enriched in polar residues; it reads FEQNENQQLT. Basic and acidic residues predominate over residues 911–935; the sequence is EHQHVHTEQVEDKPVHSHETQEHVN. The span at 943 to 956 shows a compositional bias: low complexity; the sequence is SERSQQEQLEESSL. Polar residues predominate over residues 1015-1043; sequence PNASQCFQNTSLLAAATPNEQPLTFTNEV. Residues 1061–1070 show a composition bias toward basic and acidic residues; it reads SEEKSTDEPK. Composition is skewed to polar residues over residues 1105–1116 and 1242–1251; these read SISPVNENLESS and PAQSKIVQSD. Residues 1252-1265 are compositionally biased toward acidic residues; the sequence is DSADEGDSWSSGDE.

This sequence belongs to the intermediate filament family. As to quaternary structure, forms homodimers and homotetramers in vitro. In mixtures with other intermediate filament proteins such as vimentin and alpha-internexin, preferentially forms heterodimers. As to expression, widely expressed throughout the developing nervous system at 24 hours post-fertilization (hpf). As development progresses, expression becomes restricted to proliferative zones of the developing and postembryonic central nervous system. In the peripheral nervous system, expressed in the cranial ganglia. Also expressed in mesodermal muscle precursor cells and in cranial mesenchymal tissue.

Promotes the disassembly of phosphorylated vimentin intermediate filaments (IF) during mitosis and may play a role in the trafficking and distribution of IF proteins and other cellular factors to daughter cells during progenitor cell division. Required for survival, renewal and mitogen-stimulated proliferation of neural progenitor cells. Required for brain and eye development. This Danio rerio (Zebrafish) protein is Nestin (nes).